Reading from the N-terminus, the 143-residue chain is Transcriptional regulator MraZ (143 aa).

SpoVT-AbrB domains lie at 5–47 and 76–119; these read EYRH…PQSE and ASEC…SKTL.

Belongs to the MraZ family. Forms oligomers.

It localises to the cytoplasm. It is found in the nucleoid. The polypeptide is Transcriptional regulator MraZ (Shouchella clausii (strain KSM-K16) (Alkalihalobacillus clausii)).